Here is a 233-residue protein sequence, read N- to C-terminus: Counting factor-associated protein A (233 aa).

Positions 1-21 (MKLLNSLILLVLTCLVSSINT) are cleaved as a signal peptide. 2 N-linked (GlcNAc...) asparagine glycosylation sites follow: N37 and N189.

The protein resides in the secreted. The polypeptide is Counting factor-associated protein A (cfaA) (Dictyostelium discoideum (Social amoeba)).